The following is a 476-amino-acid chain: Adenosylhomocysteinase (476 aa).

Threonine 62, aspartate 141, and glutamate 201 together coordinate substrate. 202-204 provides a ligand contact to NAD(+); that stretch reads TTT. Lysine 231 and aspartate 235 together coordinate substrate. Residues asparagine 236, 265–270, glutamate 288, asparagine 323, 344–346, and asparagine 389 each bind NAD(+); these read GYGDVG and IGH.

It belongs to the adenosylhomocysteinase family. NAD(+) is required as a cofactor.

The protein resides in the cytoplasm. It carries out the reaction S-adenosyl-L-homocysteine + H2O = L-homocysteine + adenosine. It functions in the pathway amino-acid biosynthesis; L-homocysteine biosynthesis; L-homocysteine from S-adenosyl-L-homocysteine: step 1/1. Its function is as follows. May play a key role in the regulation of the intracellular concentration of adenosylhomocysteine. The polypeptide is Adenosylhomocysteinase (Delftia acidovorans (strain DSM 14801 / SPH-1)).